We begin with the raw amino-acid sequence, 171 residues long: S-ribosylhomocysteine lyase (171 aa).

Positions 54, 58, and 128 each coordinate Fe cation.

The protein belongs to the LuxS family. As to quaternary structure, homodimer. The cofactor is Fe cation.

The catalysed reaction is S-(5-deoxy-D-ribos-5-yl)-L-homocysteine = (S)-4,5-dihydroxypentane-2,3-dione + L-homocysteine. Involved in the synthesis of autoinducer 2 (AI-2) which is secreted by bacteria and is used to communicate both the cell density and the metabolic potential of the environment. The regulation of gene expression in response to changes in cell density is called quorum sensing. Catalyzes the transformation of S-ribosylhomocysteine (RHC) to homocysteine (HC) and 4,5-dihydroxy-2,3-pentadione (DPD). The sequence is that of S-ribosylhomocysteine lyase from Salmonella typhi.